Here is a 150-residue protein sequence, read N- to C-terminus: Truncated transcription factor CAULIFLOWER A (150 aa).

The MADS-box domain occupies 1–61 (MGRGRVEMKR…GKLFEYSSES (61 aa)). Residues 90-150 (QTNWSMEYSR…IRSRKNQLMH (61 aa)) form the K-box; partial domain.

As to quaternary structure, homodimer capable of binding to CArG-box sequences. In terms of tissue distribution, expressed in some of the meristems of arrest-stage cauliflower heads.

The protein resides in the nucleus. In terms of biological role, probable transcription factor that promotes early floral meristem identity in synergy with APETALA1, FRUITFULL and LEAFY. Is required subsequently for the transition of an inflorescence meristem into a floral meristem. Seems to be partially redundant to the function of APETALA1. This chain is Truncated transcription factor CAULIFLOWER A (CAL-A), found in Brassica oleracea var. botrytis (Cauliflower).